A 222-amino-acid polypeptide reads, in one-letter code: Deoxyribose-phosphate aldolase (222 aa).

Residue D89 is the Proton donor/acceptor of the active site. The active-site Schiff-base intermediate with acetaldehyde is the K152. The Proton donor/acceptor role is filled by K181.

It belongs to the DeoC/FbaB aldolase family. DeoC type 1 subfamily.

It is found in the cytoplasm. The enzyme catalyses 2-deoxy-D-ribose 5-phosphate = D-glyceraldehyde 3-phosphate + acetaldehyde. The protein operates within carbohydrate degradation; 2-deoxy-D-ribose 1-phosphate degradation; D-glyceraldehyde 3-phosphate and acetaldehyde from 2-deoxy-alpha-D-ribose 1-phosphate: step 2/2. Catalyzes a reversible aldol reaction between acetaldehyde and D-glyceraldehyde 3-phosphate to generate 2-deoxy-D-ribose 5-phosphate. The protein is Deoxyribose-phosphate aldolase of Alkaliphilus oremlandii (strain OhILAs) (Clostridium oremlandii (strain OhILAs)).